The following is a 988-amino-acid chain: Voltage-gated delayed rectifier potassium channel KCNH5 (988 aa).

The Cytoplasmic segment spans residues 1–217; it reads MPGGKRGLVA…LHYCAFKTTW (217 aa). The region spanning 14 to 86 is the PAS domain; the sequence is TFLENIVRRS…TIEKVRQTFD (73 aa). The PAC domain maps to 91 to 143; that stretch reads NCFEVLLYKKNRTPVWFYMQIAPIRNEHEKVVLFLCTFKDITLFKQPIEDDST. The helical transmembrane segment at 218–238 threads the bilayer; it reads DWVILILTFYTAIMVPYNVSF. Over 239–243 the chain is Extracellular; the sequence is KTKQN. Residues 244–264 form a helical membrane-spanning segment; the sequence is NIAWLVLDSVVDVIFLVDIVL. Over 265–291 the chain is Cytoplasmic; that stretch reads NFHTTFVGPGGEVISDPKLIRMNYLKT. A helical transmembrane segment spans residues 292-312; that stretch reads WFVIDLLSCLPYDIINAFENV. The Extracellular segment spans residues 313–319; the sequence is DEGISSL. A helical; Voltage-sensor transmembrane segment spans residues 320-340; the sequence is FSSLKVVRLLRLGRVARKLDH. The Cytoplasmic portion of the chain corresponds to 341–346; sequence YLEYGA. The chain crosses the membrane as a helical span at residues 347–367; sequence AVLVLLVCVFGLVAHWLACIW. Topologically, residues 368–419 are extracellular; that stretch reads YSIGDYEVIDEVTNTIQIDSWLYQLALSIGTPYRYNTSAGIWEGGPSKDSLY. A glycan (N-linked (GlcNAc...) asparagine) is linked at asparagine 403. An intramembrane region (pore-forming) is located at residues 420-440; it reads VSSLYFTMTSLTTIGFGNIAP. The Selectivity filter signature appears at 432 to 437; sequence TIGFGN. Residues 441–446 are Extracellular-facing; it reads TTDVEK. Residues 447 to 467 form a helical membrane-spanning segment; the sequence is MFSVAMMMVGSLLYATIFGNV. Topologically, residues 468 to 988 are cytoplasmic; sequence TTIFQQMYAN…PESDKDEINF (521 aa). Position 550-668 (550-668) interacts with a nucleoside 3',5'-cyclic phosphate; it reads AFRLASDGCL…SFSRNLTLTC (119 aa). The tract at residues 704–715 is calmodulin-binding; sequence HPVRKLFQKFKQ. Residues 721-741 form a disordered region; that stretch reads IQGSAQSDPERSQLQVESRPL. Over residues 723–741 the composition is skewed to polar residues; sequence GSAQSDPERSQLQVESRPL. A Glycyl lysine isopeptide (Lys-Gly) (interchain with G-Cter in ubiquitin) cross-link involves residue lysine 785. The disordered stretch occupies residues 838–893; it reads GLLSEDPKGSDSENSVTKNPLRKTDSCDSGITKSDLRLDKAGEARSPLEHSPSQAD. The segment covering 871–885 has biased composition (basic and acidic residues); that stretch reads SDLRLDKAGEARSPL. A Phosphoserine modification is found at serine 883. Positions 909-948 are CAD (involved in subunit assembly); it reads TLQEVKHELKEDIQLLSCRMTALEKQVAEILKLLSEKSVP.

It belongs to the potassium channel family. H (Eag) (TC 1.A.1.20) subfamily. Kv10.2/KCNH5 sub-subfamily. In terms of assembly, homotetramer. The potassium channel is probably composed of a homo- or heterotetrameric complex of pore-forming alpha subunits that can associate with modulating beta subunits. Heteromultimer with KCNH1/EAG.

Its subcellular location is the membrane. The catalysed reaction is K(+)(in) = K(+)(out). Pore-forming (alpha) subunit of a voltage-gated delayed rectifier potassium channel that mediates outward-rectifying potassium currents which, on depolarization, reaches a steady-state level and do not inactivate. The kinetic is characterized by a slow activation time course and a small voltage dependence of the activation time constants, therefore, starts to open at more negative voltages. The activation kinetics depend on the prepulse potential and external divalent cation concentration. The time course of activation is biphasic with a fast and a slowly activating current component. With negative prepulses, the current activation is delayed and slowed down several fold, whereas more positive prepulses speed up activation, therefore the activation rate depends on holding potential. The polypeptide is Voltage-gated delayed rectifier potassium channel KCNH5 (Mus musculus (Mouse)).